A 344-amino-acid polypeptide reads, in one-letter code: Nuclear distribution protein nudE-like 1-B (344 aa).

Residues 26 to 189 (YKKSCHDAQE…ELAVRERTSD (164 aa)) adopt a coiled-coil conformation.

It belongs to the nudE family. In terms of processing, phosphorylated in mitosis.

Its subcellular location is the cytoplasm. It localises to the cytoskeleton. It is found in the microtubule organizing center. The protein resides in the centrosome. The protein localises to the spindle. In terms of biological role, required for organization of the cellular microtubule array and microtubule anchoring at the centrosome. Positively regulates the activity of the minus-end directed microtubule motor protein dynein. May enhance dynein-mediated microtubule sliding by targeting dynein to the microtubule plus end. The chain is Nuclear distribution protein nudE-like 1-B (ndel1b) from Danio rerio (Zebrafish).